A 51-amino-acid chain; its full sequence is DNA-binding protein (51 aa).

The interval 1–51 (MVYRRRRSRSADGTYTRRRRSSGYRRRPGRPRTYRRSRSATRRSGYRRRRY) is disordered. 2 consecutive repeat copies span residues 5-10 (RRRSRS) and 17-22 (RRRRSS). The segment at 5–22 (RRRSRSADGTYTRRRRSS) is 2 X 6 AA repeats of R-R-R-R-S-S. Basic residues predominate over residues 16–51 (TRRRRSSGYRRRPGRPRTYRRSRSATRRSGYRRRRY).

Probably phosphorylated in infected cells.

The protein localises to the virion. Thought to be responsible for DNA condensation during packaging of the nucleocapsids. The chain is DNA-binding protein (P6.5) from Orgyia pseudotsugata (Douglas-fir tussock moth).